The chain runs to 102 residues: Large ribosomal subunit protein uL24 (102 aa).

This sequence belongs to the universal ribosomal protein uL24 family. As to quaternary structure, part of the 50S ribosomal subunit.

One of two assembly initiator proteins, it binds directly to the 5'-end of the 23S rRNA, where it nucleates assembly of the 50S subunit. Functionally, one of the proteins that surrounds the polypeptide exit tunnel on the outside of the subunit. The polypeptide is Large ribosomal subunit protein uL24 (Allorhizobium ampelinum (strain ATCC BAA-846 / DSM 112012 / S4) (Agrobacterium vitis (strain S4))).